The chain runs to 170 residues: uncharacterized protein (170 aa).

This is an uncharacterized protein from Aquifex aeolicus (strain VF5).